The following is a 518-amino-acid chain: Ethanolamine kinase (518 aa).

Residues 1–19 (MGTETKSNSYTGQISTSGG) show a composition bias toward polar residues. The tract at residues 1-88 (MGTETKSNSY…DIRAKPEDKS (88 aa)) is disordered. The segment covering 33-68 (QTVNQQTLSLSQSNQVQNQLNSHSNSNSYPNPSGSE) has biased composition (low complexity). Residues 69-88 (NKNENEQNSRDIRAKPEDKS) are compositionally biased toward basic and acidic residues. Phosphoserine is present on residues Ser190 and Ser194.

It belongs to the choline/ethanolamine kinase family.

Its subcellular location is the cytoplasm. The catalysed reaction is ethanolamine + ATP = phosphoethanolamine + ADP + H(+). Its pathway is phospholipid metabolism; phosphatidylethanolamine biosynthesis; phosphatidylethanolamine from ethanolamine: step 1/3. Functionally, highly specific for ethanolamine phosphorylation. May be a rate-controlling step in phosphatidylethanolamine biosynthesis. This chain is Ethanolamine kinase (eas), found in Drosophila melanogaster (Fruit fly).